Reading from the N-terminus, the 108-residue chain is UPF0235 protein MM_0822 (108 aa).

It belongs to the UPF0235 family.

This Methanosarcina mazei (strain ATCC BAA-159 / DSM 3647 / Goe1 / Go1 / JCM 11833 / OCM 88) (Methanosarcina frisia) protein is UPF0235 protein MM_0822.